The primary structure comprises 223 residues: Neurotrophic factor BDNF precursor form (223 aa).

Residues 1 to 5 (SCMKA) form the signal peptide. Positions 6-114 (APMKEISIRG…AANMSMRVRR (109 aa)) are excised as a propeptide. N-linked (GlcNAc...) asparagine glycosylation is present at N107. Intrachain disulfides connect C127–C194 and C172–C223.

It belongs to the NGF-beta family.

The protein localises to the secreted. Functionally, promotes the survival of neuronal populations that are all located either in the central nervous system or directly connected to it. This chain is Neurotrophic factor BDNF precursor form (BDNF), found in Acrochordus javanicus (Javan wart snake).